The primary structure comprises 226 residues: Orotidine 5'-phosphate decarboxylase (226 aa).

Residues Asp9, Lys31, 58 to 67 (DLKLYDIPNT), Thr115, Arg176, Gln184, Gly204, and Arg205 each bind substrate. Residue Lys60 is the Proton donor of the active site.

The protein belongs to the OMP decarboxylase family. Type 1 subfamily. In terms of assembly, homodimer.

The enzyme catalyses orotidine 5'-phosphate + H(+) = UMP + CO2. The protein operates within pyrimidine metabolism; UMP biosynthesis via de novo pathway; UMP from orotate: step 2/2. Functionally, catalyzes the decarboxylation of orotidine 5'-monophosphate (OMP) to uridine 5'-monophosphate (UMP). The sequence is that of Orotidine 5'-phosphate decarboxylase from Wolbachia pipientis subsp. Culex pipiens (strain wPip).